The following is a 146-amino-acid chain: 3-dehydroquinate dehydratase (146 aa).

Tyrosine 23 serves as the catalytic Proton acceptor. 3 residues coordinate substrate: asparagine 74, histidine 80, and aspartate 87. Histidine 100 (proton donor) is an active-site residue. Residues 101–102 (IS) and arginine 111 contribute to the substrate site.

It belongs to the type-II 3-dehydroquinase family. In terms of assembly, homododecamer.

It catalyses the reaction 3-dehydroquinate = 3-dehydroshikimate + H2O. It participates in metabolic intermediate biosynthesis; chorismate biosynthesis; chorismate from D-erythrose 4-phosphate and phosphoenolpyruvate: step 3/7. Its function is as follows. Catalyzes a trans-dehydration via an enolate intermediate. This chain is 3-dehydroquinate dehydratase, found in Bacillus cereus (strain ATCC 14579 / DSM 31 / CCUG 7414 / JCM 2152 / NBRC 15305 / NCIMB 9373 / NCTC 2599 / NRRL B-3711).